Reading from the N-terminus, the 34-residue chain is Conotoxin de13a (34 aa).

2 positions are modified to 4-hydroxyproline: P3 and P7. At W14 the chain carries 6'-bromotryptophan. Residue K18 is modified to 5-hydroxylysine. P21 carries the 4-hydroxyproline modification. Position 25 is a 5-hydroxylysine (K25). The residue at position 32 (H32) is a Histidine amide.

In terms of processing, contains 4 disulfide bonds. Post-translationally, the diastereomeric form of 5-hydroxylysine found was not conclusively established, but it is probably 5R. As to expression, expressed by the venom duct.

The protein localises to the secreted. This is Conotoxin de13a from Conasprella delessertii (Sozon's cone).